A 307-amino-acid polypeptide reads, in one-letter code: Serine/threonine-protein phosphatase 4 catalytic subunit (307 aa).

Mn(2+)-binding residues include Asp54, His56, Asp82, and Asn114. The active-site Proton donor is the His115. Mn(2+)-binding residues include His164 and His238. Leu307 is modified (leucine methyl ester).

This sequence belongs to the PPP phosphatase family. PP-4 (PP-X) subfamily. Serine/threonine-protein phosphatase 4 (PP4) occurs in different assemblies of the catalytic and one or more regulatory subunits. Requires Mn(2+) as cofactor.

The protein resides in the cytoplasm. The protein localises to the nucleus. It localises to the cytoskeleton. Its subcellular location is the microtubule organizing center. It is found in the centrosome. The catalysed reaction is O-phospho-L-seryl-[protein] + H2O = L-seryl-[protein] + phosphate. It carries out the reaction O-phospho-L-threonyl-[protein] + H2O = L-threonyl-[protein] + phosphate. In terms of biological role, protein phosphatase that regulates many processes such as microtubule organization at centrosomes. This is Serine/threonine-protein phosphatase 4 catalytic subunit (ppp4c) from Xenopus laevis (African clawed frog).